The following is a 294-amino-acid chain: 1D-myo-inositol 2-acetamido-2-deoxy-alpha-D-glucopyranoside deacetylase (294 aa).

Zn(2+)-binding residues include His15, Asp18, and His150.

It belongs to the MshB deacetylase family. It depends on Zn(2+) as a cofactor.

It carries out the reaction 1D-myo-inositol 2-acetamido-2-deoxy-alpha-D-glucopyranoside + H2O = 1D-myo-inositol 2-amino-2-deoxy-alpha-D-glucopyranoside + acetate. Catalyzes the deacetylation of 1D-myo-inositol 2-acetamido-2-deoxy-alpha-D-glucopyranoside (GlcNAc-Ins) in the mycothiol biosynthesis pathway. The polypeptide is 1D-myo-inositol 2-acetamido-2-deoxy-alpha-D-glucopyranoside deacetylase (Streptomyces avermitilis (strain ATCC 31267 / DSM 46492 / JCM 5070 / NBRC 14893 / NCIMB 12804 / NRRL 8165 / MA-4680)).